Reading from the N-terminus, the 201-residue chain is Putative lipoprotein Hmuk_2215 (201 aa).

Residues 1–22 (MCPRPRRAVLLGLGVAMSAIAG) form the signal peptide. Residue Cys-23 is modified to N-acetylcysteine. A lipid anchor (S-archaeol cysteine) is attached at Cys-23. 2 disordered regions span residues 25–78 (ETAP…ETSE) and 182–201 (ATRA…GDCP). Basic and acidic residues predominate over residues 69–78 (TRADETETSE).

The protein resides in the cell membrane. In Halomicrobium mukohataei (strain ATCC 700874 / DSM 12286 / JCM 9738 / NCIMB 13541) (Haloarcula mukohataei), this protein is Putative lipoprotein Hmuk_2215.